The chain runs to 399 residues: Homoserine O-acetyltransferase (399 aa).

In terms of domain architecture, AB hydrolase-1 spans 63-372 (NAILVCHALT…TDRGHDAFLL (310 aa)). Catalysis depends on Ser-168, which acts as the Nucleophile. Arg-238 is a substrate binding site. Active-site residues include Asp-334 and His-367. Asp-368 serves as a coordination point for substrate.

This sequence belongs to the AB hydrolase superfamily. MetX family. Homodimer.

The protein localises to the cytoplasm. It catalyses the reaction L-homoserine + acetyl-CoA = O-acetyl-L-homoserine + CoA. The protein operates within amino-acid biosynthesis; L-methionine biosynthesis via de novo pathway; O-acetyl-L-homoserine from L-homoserine: step 1/1. Functionally, transfers an acetyl group from acetyl-CoA to L-homoserine, forming acetyl-L-homoserine. This Nitrobacter hamburgensis (strain DSM 10229 / NCIMB 13809 / X14) protein is Homoserine O-acetyltransferase.